The sequence spans 175 residues: Crossover junction endodeoxyribonuclease RuvC (175 aa).

Active-site residues include Asp-16, Glu-76, and Asp-148. Asp-16, Glu-76, and Asp-148 together coordinate Mg(2+).

This sequence belongs to the RuvC family. In terms of assembly, homodimer which binds Holliday junction (HJ) DNA. The HJ becomes 2-fold symmetrical on binding to RuvC with unstacked arms; it has a different conformation from HJ DNA in complex with RuvA. In the full resolvosome a probable DNA-RuvA(4)-RuvB(12)-RuvC(2) complex forms which resolves the HJ. Mg(2+) serves as cofactor.

It localises to the cytoplasm. It catalyses the reaction Endonucleolytic cleavage at a junction such as a reciprocal single-stranded crossover between two homologous DNA duplexes (Holliday junction).. In terms of biological role, the RuvA-RuvB-RuvC complex processes Holliday junction (HJ) DNA during genetic recombination and DNA repair. Endonuclease that resolves HJ intermediates. Cleaves cruciform DNA by making single-stranded nicks across the HJ at symmetrical positions within the homologous arms, yielding a 5'-phosphate and a 3'-hydroxyl group; requires a central core of homology in the junction. The consensus cleavage sequence is 5'-(A/T)TT(C/G)-3'. Cleavage occurs on the 3'-side of the TT dinucleotide at the point of strand exchange. HJ branch migration catalyzed by RuvA-RuvB allows RuvC to scan DNA until it finds its consensus sequence, where it cleaves and resolves the cruciform DNA. In Bradyrhizobium diazoefficiens (strain JCM 10833 / BCRC 13528 / IAM 13628 / NBRC 14792 / USDA 110), this protein is Crossover junction endodeoxyribonuclease RuvC.